A 614-amino-acid chain; its full sequence is Signal recognition particle receptor subunit alpha homolog (614 aa).

Residues 119–244 (EASAKQVKAP…DRSRDSPDDV (126 aa)) form a disordered region. Positions 149–160 (QDDKKPVEKRVN) are enriched in basic and acidic residues. Pro residues predominate over residues 164 to 178 (APPPSKSQPSSPPTG). Residues 232 to 241 (ALLDRSRDSP) show a composition bias toward basic and acidic residues. 2 positions are modified to phosphoserine: serine 237 and serine 240. Tyrosine 246 bears the Phosphotyrosine mark. Phosphoserine occurs at positions 268, 278, and 279. Residues 268-285 (SEDEADNEDASSEGEAEE) show a composition bias toward acidic residues. The interval 268-290 (SEDEADNEDASSEGEAEEQVQSK) is disordered. The tract at residues 396-613 (YTIIFCGVNG…NVNAVVNSLM (218 aa)) is NG domain. GTP-binding positions include 402-409 (GVNGVGKS), 497-501 (DTAGR), and 565-568 (TKFD).

Belongs to the GTP-binding SRP family. Heterodimer of SrpRalpha and SrpRbeta. In terms of tissue distribution, in 8-9 hours embryos, expression is seen in a segmental pattern along embryonic ventral midline.

The protein localises to the endoplasmic reticulum membrane. Its function is as follows. Component of the SRP (signal recognition particle) receptor. Ensures, in conjunction with the signal recognition particle, the correct targeting of the nascent secretory proteins to the endoplasmic reticulum membrane system. Forms a guanosine 5'-triphosphate (GTP)-dependent complex with the SRP subunit Srp54. SRP receptor compaction and GTPase rearrangement drive SRP-mediated cotranslational protein translocation into the ER. May have a role in axonogenesis. This is Signal recognition particle receptor subunit alpha homolog from Drosophila melanogaster (Fruit fly).